The primary structure comprises 314 residues: DNA topoisomerase 1 (314 aa).

A Topo IB-type catalytic domain is found at 73-314 (GKMHVQRRNS…TDYITNTQTV (242 aa)). The active-site O-(3'-phospho-DNA)-tyrosine intermediate is the Tyr-273.

Belongs to the type IB topoisomerase family.

The enzyme catalyses ATP-independent breakage of single-stranded DNA, followed by passage and rejoining.. Functionally, releases the supercoiling and torsional tension of DNA introduced during the DNA replication and transcription by transiently cleaving and rejoining one strand of the DNA duplex. Introduces a single-strand break via transesterification at a target site in duplex DNA. The scissile phosphodiester is attacked by the catalytic tyrosine of the enzyme, resulting in the formation of a DNA-(3'-phosphotyrosyl)-enzyme intermediate and the expulsion of a 5'-OH DNA strand. The free DNA strand then undergoes passage around the unbroken strand thus removing DNA supercoils. Finally, in the religation step, the DNA 5'-OH attacks the covalent intermediate to expel the active-site tyrosine and restore the DNA phosphodiester backbone. This chain is DNA topoisomerase 1 (TOP1), found in Oryctolagus cuniculus (Rabbit).